The primary structure comprises 209 residues: Transcription elongation factor A protein-like 4 (209 aa).

Methionine 1 bears the N-acetylmethionine mark. The interval 1–125 (MEKLYNENEG…VPRKAKRKTN (125 aa)) is disordered. Residues 25–96 (QDERKPEVAC…GSEREGKPES (72 aa)) show a composition bias toward basic and acidic residues. 2 positions are modified to phosphoserine: serine 88 and serine 96.

It belongs to the TFS-II family. TFA subfamily.

The protein localises to the nucleus. Its function is as follows. May be involved in transcriptional regulation. The chain is Transcription elongation factor A protein-like 4 (TCEAL4) from Pongo abelii (Sumatran orangutan).